The sequence spans 255 residues: DNA repair protein RecO (255 aa).

Belongs to the RecO family.

Involved in DNA repair and RecF pathway recombination. The polypeptide is DNA repair protein RecO (Acidithiobacillus ferrooxidans (strain ATCC 23270 / DSM 14882 / CIP 104768 / NCIMB 8455) (Ferrobacillus ferrooxidans (strain ATCC 23270))).